The chain runs to 184 residues: MRNLIFFVIPFHFWLPAEGFKLNTNLLETNLINLGVVLGLLVYFGKGVLNNLLDKRKQTILSTIRDAEERYKEATDKLKQAQIRLQQAELKANEIRVNGLSEMEKEKQDLINIADEDSKRLEDSKNATIRFEEQRAIEQVRQQVSRLALERASEVLNNCLNSELHSRMIDYHIGLLKTMGSTTE.

A helical membrane pass occupies residues 29 to 49 (TNLINLGVVLGLLVYFGKGVL).

It belongs to the ATPase B chain family. F-type ATPases have 2 components, F(1) - the catalytic core - and F(0) - the membrane proton channel. F(1) has five subunits: alpha(3), beta(3), gamma(1), delta(1), epsilon(1). F(0) has four main subunits: a(1), b(1), b'(1) and c(10-14). The alpha and beta chains form an alternating ring which encloses part of the gamma chain. F(1) is attached to F(0) by a central stalk formed by the gamma and epsilon chains, while a peripheral stalk is formed by the delta, b and b' chains.

The protein resides in the plastid. It is found in the chloroplast thylakoid membrane. Its function is as follows. F(1)F(0) ATP synthase produces ATP from ADP in the presence of a proton or sodium gradient. F-type ATPases consist of two structural domains, F(1) containing the extramembraneous catalytic core and F(0) containing the membrane proton channel, linked together by a central stalk and a peripheral stalk. During catalysis, ATP synthesis in the catalytic domain of F(1) is coupled via a rotary mechanism of the central stalk subunits to proton translocation. Functionally, component of the F(0) channel, it forms part of the peripheral stalk, linking F(1) to F(0). The protein is ATP synthase subunit b, chloroplastic of Anthoceros angustus (Hornwort).